We begin with the raw amino-acid sequence, 544 residues long: Chitin-inducible gibberellin-responsive protein 2 (544 aa).

The disordered stretch occupies residues 1-123 (MADTPTSRMI…VGASCVTEDP (123 aa)). Composition is skewed to polar residues over residues 15 to 30 (NIPS…SDNP), 63 to 74 (SQATPNKYTLDS), and 86 to 101 (PSSQ…PLSQ). The region spanning 165–544 (RMMGIPRGNL…RPLVVSSAWH (380 aa)) is the GRAS domain. The segment at 172–232 (GNLKELLIAC…VARLASSGIS (61 aa)) is leucine repeat I (LRI). A VHIID region spans residues 251–316 (MHFLYEACPY…GGPPTVRITG (66 aa)). Residues 282-286 (IHIID) carry the VHIID motif. Residues 332 to 364 (LVGRRLSHIASLCKVPFEFHPLAISGSKVEAAH) are leucine repeat II (LRII). The PFYRE stretch occupies residues 373-467 (LAVNFTLELH…QHCLAREIVN (95 aa)). Positions 470 to 544 (ACEGEERAER…RPLVVSSAWH (75 aa)) are SAW.

This sequence belongs to the GRAS family.

The protein resides in the nucleus. May play a regulatory role in the early step of oligosaccharide elicitor response, downstream of the membrane-associated high-affinity chitin-binding protein. This chain is Chitin-inducible gibberellin-responsive protein 2 (CIGR2), found in Oryza sativa subsp. japonica (Rice).